The following is a 38-amino-acid chain: Small toxic protein BsrG (38 aa).

The helical transmembrane segment at 11-31 (INFGGLILNTVLLIFNIMMIV) threads the bilayer.

The protein localises to the cell membrane. Functionally, toxic component of a type I toxin-antitoxin (TA) system; expression in the absence of cognate antisense antitoxin SR4 RNA leads to cell lysis. Induced expression causes membrane invaginations that dislocate the cell wall synthesis machinery, leading to eventual death. Unlike many type I TA systems it does not form pores. Base pairing occurs between the 3' UTRs of bsrG mRNA and SR4 RNA, which leads to initiation of degradation by RNase III (rnc) followed by the action of RNase Y (rny) and RNase R (rnr). Not toxic when expressed in E.coli. When induced during logarithmic growth it only slowly exerts its toxic effect. Expression during log growth leads to significant disturbances of cell envelope biosynthesis and cell morphology, causing cell membrane invaginations and delocalization of cell division and cell wall synthesis machinery. Cell lysis depends on mreB, lytC and lytD, suggesting expression of bsrG triggers autolysis rather than disintegration of the membrane. Additionally expression of bsrG also inhibits transcription. The polypeptide is Small toxic protein BsrG (Bacillus subtilis (strain 168)).